A 189-amino-acid polypeptide reads, in one-letter code: NADH-quinone oxidoreductase subunit B (189 aa).

[4Fe-4S] cluster contacts are provided by cysteine 39, cysteine 40, cysteine 104, and cysteine 135.

It belongs to the complex I 20 kDa subunit family. NDH-1 is composed of 14 different subunits. Subunits NuoB, C, D, E, F, and G constitute the peripheral sector of the complex. The cofactor is [4Fe-4S] cluster.

The protein resides in the cell inner membrane. It catalyses the reaction a quinone + NADH + 5 H(+)(in) = a quinol + NAD(+) + 4 H(+)(out). In terms of biological role, NDH-1 shuttles electrons from NADH, via FMN and iron-sulfur (Fe-S) centers, to quinones in the respiratory chain. The immediate electron acceptor for the enzyme in this species is believed to be a menaquinone. Couples the redox reaction to proton translocation (for every two electrons transferred, four hydrogen ions are translocated across the cytoplasmic membrane), and thus conserves the redox energy in a proton gradient. The sequence is that of NADH-quinone oxidoreductase subunit B from Chlorobium luteolum (strain DSM 273 / BCRC 81028 / 2530) (Pelodictyon luteolum).